Reading from the N-terminus, the 250-residue chain is DNA repair protein RecO (250 aa).

It belongs to the RecO family.

Functionally, involved in DNA repair and RecF pathway recombination. The sequence is that of DNA repair protein RecO from Staphylococcus aureus (strain MW2).